A 556-amino-acid chain; its full sequence is Arginine--tRNA ligase (556 aa).

Positions 132–142 (ANPTGDLHLGH) match the 'HIGH' region motif.

Belongs to the class-I aminoacyl-tRNA synthetase family. In terms of assembly, monomer.

It is found in the cytoplasm. It catalyses the reaction tRNA(Arg) + L-arginine + ATP = L-arginyl-tRNA(Arg) + AMP + diphosphate. This is Arginine--tRNA ligase from Listeria monocytogenes serovar 1/2a (strain ATCC BAA-679 / EGD-e).